The sequence spans 533 residues: MAFANLRKVLISDSLDPCCRKILQDGGLQVVEKQNLSKEELIAELQDCEGLIVRSATKVTADVINAAEKLQVVGRAGTGVDNVDLEAATRKGILVMNTPNGNSLSAAELTCGMIMCLARQIPQATASMKDGKWERKKFMGTELNGKTLGILGLGRIGREVATRMQSFGMKTIGYDPIISPEVSASFGVQQLPLEEIWPLCDFITVHTPLLPSTTGLLNDNTFAQCKKGVRVVNCARGGIVDEGALLRALQSGQCAGAALDVFTEEPPRDRALVDHENVISCPHLGASTKEAQSRCGEEIAVQFVDMVKGKSLTGVVNAQALTSAFSPHTKPWIGLAEALGTLMRAWAGSPKGTIQVITQGTSLKNAGNCLSPAVIVGLLKEASKQADVNLVNAKLLVKEAGLNVTTSHSPAAPGEQGFGECLLAVALAGAPYQAVGLVQGTTPVLQGLNGAVFRPEVPLRRDLPLLLFRTQTSDPAMPPTMMGLLAEAGVRLLSYQTSLVSDGETWHVMGIPSLLPSLEAWKQHVTEAFQFHF.

At alanine 2 the chain carries N-acetylalanine. Residue serine 14 is modified to Phosphoserine. Position 21 is an N6-acetyllysine; alternate (lysine 21). A Glycyl lysine isopeptide (Lys-Gly) (interchain with G-Cter in SUMO1); alternate cross-link involves residue lysine 21. A Glycyl lysine isopeptide (Lys-Gly) (interchain with G-Cter in SUMO2); alternate cross-link involves residue lysine 21. Lysine 58 bears the N6-acetyllysine mark. NAD(+)-binding positions include threonine 78, 155–156, aspartate 175, threonine 207, 234–236, and aspartate 260; these read RI and CAR. Threonine 78 carries the phosphothreonine modification. Arginine 236 is an active-site residue. Glutamate 265 is a catalytic residue. The active-site Proton donor is the histidine 283. Residue 283-286 coordinates NAD(+); the sequence is HLGA.

It belongs to the D-isomer specific 2-hydroxyacid dehydrogenase family. Homotetramer.

It carries out the reaction (2R)-3-phosphoglycerate + NAD(+) = 3-phosphooxypyruvate + NADH + H(+). The enzyme catalyses (R)-2-hydroxyglutarate + NAD(+) = 2-oxoglutarate + NADH + H(+). The catalysed reaction is (S)-malate + NAD(+) = oxaloacetate + NADH + H(+). It participates in amino-acid biosynthesis; L-serine biosynthesis; L-serine from 3-phospho-D-glycerate: step 1/3. In terms of biological role, catalyzes the reversible oxidation of 3-phospho-D-glycerate to 3-phosphonooxypyruvate, the first step of the phosphorylated L-serine biosynthesis pathway. Also catalyzes the reversible oxidation of 2-hydroxyglutarate to 2-oxoglutarate and the reversible oxidation of (S)-malate to oxaloacetate. This Pan troglodytes (Chimpanzee) protein is D-3-phosphoglycerate dehydrogenase (PHGDH).